Reading from the N-terminus, the 353-residue chain is MSLPLSLQTLVKKTVASQCLSTDEHCILKHCGLWWHDVPLKLCMDRGQIQIKSGFLGEDIDLHIALIIAVKENNYSLIKLFTEWGAHINYSLLSINTEHIRELCRQLGAKETLEDNDIFRIFTKIMHNKTSGRIILCHEIFMNNPNIENKFTIQLRGLICKRLWGLIEIKETDELNDLLVKYWYAKAVQYECKDAICFLDEKYTDLNEWRLKCLLYYNKIYELHEMYHKEKVQIDVHDMICLASTKDNNPLTIYYCYALGGNINQAMLTSVQYYNIGNIFFCIDLGGNAFEEGRAIAEQKGYHFLSHSLTLDIYSSDASLPLNLKDPEEISSLLKDYKSKNLSIIWEYSHNIL.

Belongs to the asfivirus MGF 360 family.

Functionally, plays a role in virus cell tropism, and may be required for efficient virus replication in macrophages. This is Protein MGF 360-13L from African swine fever virus (isolate Warthog/Namibia/Wart80/1980) (ASFV).